The chain runs to 83 residues: Defensin-2 (83 aa).

Residues 1 to 33 form the signal peptide; it reads MAGKGVGTPLSALFLLVLLVVTIGMMEVQVAEG. Disulfide bonds link cysteine 36/cysteine 82, cysteine 47/cysteine 67, cysteine 53/cysteine 76, and cysteine 57/cysteine 78.

This sequence belongs to the DEFL family.

It is found in the secreted. Its function is as follows. Plant defense peptide. Has antifungal activity. The protein is Defensin-2 of Pinus sylvestris (Scotch pine).